A 370-amino-acid polypeptide reads, in one-letter code: Chaperone protein DnaJ (370 aa).

Residues 6–70 form the J domain; that stretch reads DYYEVLGVQR…EKRSMYDRFG (65 aa). A CR-type zinc finger spans residues 128–208; sequence GVEKTIEFRR…CRGEGRVRQT (81 aa). Zn(2+) contacts are provided by Cys-141, Cys-144, Cys-158, Cys-161, Cys-182, Cys-185, Cys-196, and Cys-199. CXXCXGXG motif repeat units lie at residues 141-148, 158-165, 182-189, and 196-203; these read CPACRGSG, CPKCGGLG, CDMCRGEG, and CRECRGEG.

This sequence belongs to the DnaJ family. Homodimer. Zn(2+) serves as cofactor.

It localises to the cytoplasm. Its function is as follows. Participates actively in the response to hyperosmotic and heat shock by preventing the aggregation of stress-denatured proteins and by disaggregating proteins, also in an autonomous, DnaK-independent fashion. Unfolded proteins bind initially to DnaJ; upon interaction with the DnaJ-bound protein, DnaK hydrolyzes its bound ATP, resulting in the formation of a stable complex. GrpE releases ADP from DnaK; ATP binding to DnaK triggers the release of the substrate protein, thus completing the reaction cycle. Several rounds of ATP-dependent interactions between DnaJ, DnaK and GrpE are required for fully efficient folding. Also involved, together with DnaK and GrpE, in the DNA replication of plasmids through activation of initiation proteins. The chain is Chaperone protein DnaJ from Roseiflexus sp. (strain RS-1).